The chain runs to 188 residues: MKANDIKKGNVVEYNNGVYQIRDIERSSPQGRGGNVRFRFIMYSVPGGNKLDASFDADDNLVEVELLRRQSTYSYKDGDAFVFLDDEDYTPYTLDADVIGDDAGYITDGLTGIYVQVIDEQPVAIQLPASVVLEVIETPPELKGGTATKRPKPAKLNTGIEIMVPEYIVNGERVLVNTATGEFAGRAD.

This sequence belongs to the elongation factor P family.

This Stenotrophomonas maltophilia (strain K279a) protein is Elongation factor P-like protein.